Here is a 518-residue protein sequence, read N- to C-terminus: Probable bifunctional methylthioribulose-1-phosphate dehydratase/enolase-phosphatase E1 (518 aa).

A methylthioribulose-1-phosphate dehydratase region spans residues 1-242; the sequence is MACCGGGRGE…AIKLYQLGID (242 aa). Residue cysteine 114 participates in substrate binding. Zn(2+) is bound by residues histidine 132 and histidine 134. Catalysis depends on glutamate 157, which acts as the Proton donor/acceptor; for methylthioribulose-1-phosphate dehydratase activity. Histidine 207 provides a ligand contact to Zn(2+). The segment at 279-518 is enolase-phosphatase E1; that stretch reads VVLDIEGTTT…FRTIKSFSEI (240 aa). Residues aspartate 282 and glutamate 284 each contribute to the Mg(2+) site. Substrate contacts are provided by residues 417–418 and lysine 451; that span reads SS. Aspartate 477 provides a ligand contact to Mg(2+).

It in the N-terminal section; belongs to the aldolase class II family. MtnB subfamily. In the C-terminal section; belongs to the HAD-like hydrolase superfamily. MasA/MtnC family. Zn(2+) is required as a cofactor. Mg(2+) serves as cofactor.

The enzyme catalyses 5-(methylsulfanyl)-D-ribulose 1-phosphate = 5-methylsulfanyl-2,3-dioxopentyl phosphate + H2O. The catalysed reaction is 5-methylsulfanyl-2,3-dioxopentyl phosphate + H2O = 1,2-dihydroxy-5-(methylsulfanyl)pent-1-en-3-one + phosphate. It functions in the pathway amino-acid biosynthesis; L-methionine biosynthesis via salvage pathway; L-methionine from S-methyl-5-thio-alpha-D-ribose 1-phosphate: step 2/6. The protein operates within amino-acid biosynthesis; L-methionine biosynthesis via salvage pathway; L-methionine from S-methyl-5-thio-alpha-D-ribose 1-phosphate: step 3/6. It participates in amino-acid biosynthesis; L-methionine biosynthesis via salvage pathway; L-methionine from S-methyl-5-thio-alpha-D-ribose 1-phosphate: step 4/6. The polypeptide is Probable bifunctional methylthioribulose-1-phosphate dehydratase/enolase-phosphatase E1 (Oryza sativa subsp. indica (Rice)).